The primary structure comprises 178 residues: NADH-quinone oxidoreductase subunit I (178 aa).

2 consecutive 4Fe-4S ferredoxin-type domains span residues 45–74 (RHPD…VEAA) and 90–119 (KVYE…LGNE). 8 residues coordinate [4Fe-4S] cluster: cysteine 54, cysteine 57, cysteine 60, cysteine 64, cysteine 99, cysteine 102, cysteine 105, and cysteine 109.

It belongs to the complex I 23 kDa subunit family. NDH-1 is composed of 15 different subunits. Subunits NuoA, H, J, K, L, M, N constitute the membrane sector of the complex. It depends on [4Fe-4S] cluster as a cofactor.

It localises to the cell membrane. It catalyses the reaction a quinone + NADH + 5 H(+)(in) = a quinol + NAD(+) + 4 H(+)(out). Its function is as follows. NDH-1 shuttles electrons from NADH, via FMN and iron-sulfur (Fe-S) centers, to quinones in the respiratory chain. The immediate electron acceptor for the enzyme in this species is believed to be ubiquinone. Couples the redox reaction to proton translocation (for every two electrons transferred, four hydrogen ions are translocated across the cytoplasmic membrane), and thus conserves the redox energy in a proton gradient. The protein is NADH-quinone oxidoreductase subunit I of Deinococcus radiodurans (strain ATCC 13939 / DSM 20539 / JCM 16871 / CCUG 27074 / LMG 4051 / NBRC 15346 / NCIMB 9279 / VKM B-1422 / R1).